Reading from the N-terminus, the 249-residue chain is Anamorsin homolog (249 aa).

Residues 1–130 (MEQFKDLQKS…ETGSAARLSF (130 aa)) are N-terminal SAM-like domain. Positions 131–161 (AKKAAGVNVWKISGDDEELIDEEDLLDEADK) are linker. Cysteine 172, cysteine 181, cysteine 184, and cysteine 186 together coordinate [2Fe-2S] cluster. The tract at residues 172-186 (CSTTGKRKACKNCSC) is fe-S binding site A. 4 residues coordinate [4Fe-4S] cluster: cysteine 210, cysteine 213, cysteine 221, and cysteine 224. Short sequence motifs (cx2C motif) lie at residues 210–213 (CGNC) and 221–224 (CSTC). The tract at residues 210–224 (CGNCYLGDAFRCSTC) is fe-S binding site B.

Belongs to the anamorsin family. Monomer. Requires [2Fe-2S] cluster as cofactor. [4Fe-4S] cluster serves as cofactor.

The protein resides in the cytoplasm. The protein localises to the mitochondrion intermembrane space. Functionally, component of the cytosolic iron-sulfur (Fe-S) protein assembly (CIA) machinery. Required for the maturation of extramitochondrial Fe-S proteins. Part of an electron transfer chain functioning in an early step of cytosolic Fe-S biogenesis, facilitating the de novo assembly of a [4Fe-4S] cluster on the cytosolic Fe-S scaffold complex. Electrons are transferred from NADPH via a FAD- and FMN-containing diflavin oxidoreductase. Together with the diflavin oxidoreductase, also required for the assembly of the diferric tyrosyl radical cofactor of ribonucleotide reductase (RNR), probably by providing electrons for reduction during radical cofactor maturation in the catalytic small subunit. The protein is Anamorsin homolog of Drosophila grimshawi (Hawaiian fruit fly).